Reading from the N-terminus, the 469-residue chain is UDP-N-acetylmuramate--L-alanine ligase (469 aa).

112–118 (GTHGKTT) is a binding site for ATP.

Belongs to the MurCDEF family.

Its subcellular location is the cytoplasm. It carries out the reaction UDP-N-acetyl-alpha-D-muramate + L-alanine + ATP = UDP-N-acetyl-alpha-D-muramoyl-L-alanine + ADP + phosphate + H(+). It functions in the pathway cell wall biogenesis; peptidoglycan biosynthesis. Cell wall formation. The protein is UDP-N-acetylmuramate--L-alanine ligase of Laribacter hongkongensis (strain HLHK9).